Here is an 898-residue protein sequence, read N- to C-terminus: Chloride channel protein 2 (898 aa).

N-acetylalanine is present on Ala2. At 2 to 87 (AAAAAEEGME…RCHKFLVSRV (86 aa)) the chain is on the cytoplasmic side. The interval 16–34 (QYEQTLMYGRYTQDLGAFA) is essential for channel gating by both voltage and cell volume. Position 20 is a phosphothreonine (Thr20). Residues 36–49 (EEAARIRLGGPEPW) are modulates channel gating by both voltage and cell volume. The next 2 membrane-spanning stretches (helical) occupy residues 88-121 (GEDW…AQQW) and 130-155 (ILLQ…TQIL). The short motif at 161-165 (GSGIP) is the Selectivity filter part_1 element. Residue Ser162 participates in chloride binding. Positions 164-171 (IPEMKTIL) form an intramembrane region, helical. Helical transmembrane passes span 180–198 (LTLK…ALGS) and 205–223 (EGPF…SKFL). A Selectivity filter part_2 motif is present at residues 203-207 (GKEGP). 2 intramembrane regions (helical) span residues 239–251 (MLAA…VGCC) and 255–263 (PIGGVLFSI). The next 5 helical transmembrane spans lie at 275–295 (YWRG…LAVW), 321–349 (LPAF…VQVM), 358–377 (FLMR…ISTL), 429–449 (ANVF…SALA), and 457–480 (GAFM…MAAW). Positions 457–461 (GAFMP) match the Selectivity filter part_3 motif. Phe459 contacts chloride. An intramembrane region (helical) is located at residues 497–511 (GGYAVVGAAALAGAV). Residues 512–513 (TH) constitute an intramembrane region (note=Loop between two helices). The segment at residues 514–525 (TVSTAVIVFELT) is an intramembrane region (helical). The segment at residues 526–530 (GQIAH) is an intramembrane region (note=Loop between two helices). A helical membrane pass occupies residues 531-548 (ILPVMIAVILANAVAQSL). Residues 549–898 (QPSLYDSIIR…SPSDSDDKCQ (350 aa)) lie on the Cytoplasmic side of the membrane. Tyr553 lines the chloride pocket. The 59-residue stretch at 584–642 (MVRDVPHVALSCTFRDLRLALHRTKGRMLALVESPESMILLGSIERSQVVALLGAQLSP) folds into the CBS 1 domain. 2 disordered regions span residues 643-672 (ARRR…PEAS) and 686-717 (AARG…TGSA). Positions 705–717 (VTRNLGESPTGSA) are enriched in polar residues. Ser712 and Ser758 each carry phosphoserine. Positions 790-850 (IDPAPFQLVE…GSVTAQGVKV (61 aa)) constitute a CBS 2 domain. A Basolateral membrane sorting motif is present at residues 812–813 (LL). Residues 856-898 (SFRDSATSSSDTETTEVHALWGPHSRHGLPREGSPSDSDDKCQ) are disordered.

It belongs to the chloride channel (TC 2.A.49) family. ClC-2/CLCN2 subfamily. Homodimer. Interacts with auxiliary subunit HEPACAM. Post-translationally, phosphorylated. Activated by dephosphorylation. Ubiquitously expressed. Moderately expressed in aortic and coronary vascular smooth muscle cells and expressed at a low level in aortic endothelial cells. Expressed in the adrenal gland, predominantly in the zona glomerulosa. Expressed in white mater perivascular astrocytes and ependymal cells (at protein level).

It is found in the cell membrane. The protein resides in the basolateral cell membrane. Its subcellular location is the cell projection. The protein localises to the dendritic spine membrane. It localises to the axon. It carries out the reaction chloride(in) = chloride(out). The catalysed reaction is thiocyanate(in) = thiocyanate(out). The enzyme catalyses bromide(in) = bromide(out). It catalyses the reaction nitrate(in) = nitrate(out). It carries out the reaction iodide(out) = iodide(in). Common gate kinetics are down-regulated by intracellular ATP. Inhibited by AK-42, a derivative of meclofenamate. Inhibited by Cd(2+). Inhibited by Zn(2+) and PKC activation. Inhibited at acidic pH. CCLN2:HEPACAM channel conductance is up-regulated upon hypo-osmolarity. Its function is as follows. Voltage-gated and osmosensitive chloride channel. Forms a homodimeric channel where each subunit has its own ion conduction pathway. Conducts double-barreled currents controlled by two types of gates, two fast glutamate gates that control each subunit independently and a slow common gate that opens and shuts off both subunits simultaneously. Displays inward rectification currents activated upon membrane hyperpolarization and extracellular hypotonicity. Contributes to chloride conductance involved in neuron excitability. In hippocampal neurons, generates a significant part of resting membrane conductance and provides an additional chloride efflux pathway to prevent chloride accumulation in dendrites upon GABA receptor activation. In glia, associates with the auxiliary subunit HEPACAM/GlialCAM at astrocytic processes and myelinated fiber tracts where it may regulate transcellular chloride flux buffering extracellular chloride and potassium concentrations. Regulates aldosterone production in adrenal glands. The opening of CLCN2 channels at hyperpolarized membrane potentials in the glomerulosa causes cell membrane depolarization, activation of voltage-gated calcium channels and increased expression of aldosterone synthase, the rate-limiting enzyme for aldosterone biosynthesis. Contributes to chloride conductance in retinal pigment epithelium involved in phagocytosis of shed photoreceptor outer segments and photoreceptor renewal. Conducts chloride currents at the basolateral membrane of epithelial cells with a role in chloride reabsorption rather than secretion. Permeable to small monovalent anions with chloride &gt; thiocyanate &gt; bromide &gt; nitrate &gt; iodide ion selectivity. This Homo sapiens (Human) protein is Chloride channel protein 2.